A 1026-amino-acid chain; its full sequence is Contactin-4 (1026 aa).

The first 18 residues, 1 to 18, serve as a signal peptide directing secretion; the sequence is MRLPWELLVLQSFILCLA. 6 Ig-like C2-type domains span residues 32 to 117, 122 to 207, 225 to 311, 316 to 400, 406 to 493, and 497 to 586; these read PSPV…AKLQ, DNFK…KVLG, PKIE…GQLT, PNWI…AELS, PDFS…GNLV, and PTRV…DRLS. 6 disulfides stabilise this stretch: cysteine 50–cysteine 100, cysteine 144–cysteine 194, cysteine 247–cysteine 295, cysteine 337–cysteine 384, cysteine 429–cysteine 477, and cysteine 519–cysteine 576. 3 N-linked (GlcNAc...) asparagine glycosylation sites follow: asparagine 65, asparagine 90, and asparagine 191. N-linked (GlcNAc...) asparagine glycans are attached at residues asparagine 370, asparagine 375, and asparagine 466. Fibronectin type-III domains follow at residues 599 to 697, 702 to 799, 804 to 899, and 900 to 995; these read PPEA…TEEA, TPAN…SAEE, PPAS…TRKP, and PPSQ…ISNA. The interval 685-710 is disordered; it reads PSRPSEKRRTEEALPEVTPANVSGGG. The span at 687-696 shows a compositional bias: basic and acidic residues; the sequence is RPSEKRRTEE. Asparagine 705, asparagine 764, asparagine 858, asparagine 893, asparagine 911, asparagine 929, and asparagine 954 each carry an N-linked (GlcNAc...) asparagine glycan. Residues 886–896 show a composition bias toward polar residues; it reads GPSSATVNVTT. Residues 886 to 907 form a disordered region; sequence GPSSATVNVTTRKPPPSQPPGN. A lipid anchor (GPI-anchor amidated serine) is attached at serine 1000. Positions 1001 to 1026 are cleaved as a propeptide — removed in mature form; it reads GASTSNACTLSAISTIMISLTARSSL.

The protein belongs to the immunoglobulin superfamily. Contactin family. In terms of assembly, interacts with PTPRG. Mainly expressed in brain. Highly expressed in cerebellum and weakly expressed in corpus callosum, caudate nucleus, amygdala and spinal cord. Also expressed in testis, pancreas, thyroid, uterus, small intestine and kidney. Not expressed in skeletal muscle. Isoform 2 is weakly expressed in cerebral cortex.

The protein resides in the cell membrane. The protein localises to the secreted. Functionally, contactins mediate cell surface interactions during nervous system development. Has some neurite outgrowth-promoting activity. May be involved in synaptogenesis. This chain is Contactin-4 (CNTN4), found in Homo sapiens (Human).